A 449-amino-acid chain; its full sequence is UDP-N-acetylmuramoyl-tripeptide--D-alanyl-D-alanine ligase (449 aa).

106–112 (GSVGKTS) contacts ATP.

Belongs to the MurCDEF family. MurF subfamily.

It localises to the cytoplasm. The enzyme catalyses D-alanyl-D-alanine + UDP-N-acetyl-alpha-D-muramoyl-L-alanyl-gamma-D-glutamyl-meso-2,6-diaminopimelate + ATP = UDP-N-acetyl-alpha-D-muramoyl-L-alanyl-gamma-D-glutamyl-meso-2,6-diaminopimeloyl-D-alanyl-D-alanine + ADP + phosphate + H(+). Its pathway is cell wall biogenesis; peptidoglycan biosynthesis. In terms of biological role, involved in cell wall formation. Catalyzes the final step in the synthesis of UDP-N-acetylmuramoyl-pentapeptide, the precursor of murein. This Rickettsia prowazekii (strain Madrid E) protein is UDP-N-acetylmuramoyl-tripeptide--D-alanyl-D-alanine ligase.